The sequence spans 283 residues: tRNA pseudouridine synthase B (283 aa).

Residue Asp-38 is the Nucleophile of the active site.

This sequence belongs to the pseudouridine synthase TruB family. Type 1 subfamily.

It carries out the reaction uridine(55) in tRNA = pseudouridine(55) in tRNA. Its function is as follows. Responsible for synthesis of pseudouridine from uracil-55 in the psi GC loop of transfer RNAs. The sequence is that of tRNA pseudouridine synthase B from Onion yellows phytoplasma (strain OY-M).